We begin with the raw amino-acid sequence, 354 residues long: MGGSFLQSWLNKALSWPGWYKWYWWLTSTKSLSIGRLVCVEALFWSLSFYVVVLLSVAYLTLFERKVLAASQVRKGPEMVGWLGIMQPFADGIKLFSKEYFTPSNSNPALFFLGPCFMLLHSFILWGCSPGIWGCGVYFFWGGLYVLSVLSVGVYGVVLCGWSSNSRYAMFGAVRALAQVISYEVMLVFLYLCPFFVVGSLDLESVSLSQVSGCNGGVLFLVLPWWVFCVLAESNRAPFDFVEGESELVSGFNVEYGSGGFAMIFIAEYSNILFLSTLTSVLFLGGGNLLGNGEYFGLISSSVIGSFFSFMVVFLIVLCRSSFPRYRYDMLMKLIWCQILPILMSCFALFLMII.

8 helical membrane passes run 43–63, 108–128, 139–159, 180–200, 211–231, 264–284, 298–318, and 334–354; these read LFWSLSFYVVVLLSVAYLTLF, PALFFLGPCFMLLHSFILWGC, FFWGGLYVLSVLSVGVYGVVL, VISYEVMLVFLYLCPFFVVGS, VSGCNGGVLFLVLPWWVFCVL, IFIAEYSNILFLSTLTSVLFL, LISSSVIGSFFSFMVVFLIVL, and LIWCQILPILMSCFALFLMII.

This sequence belongs to the complex I subunit 1 family.

The protein resides in the mitochondrion inner membrane. The enzyme catalyses a ubiquinone + NADH + 5 H(+)(in) = a ubiquinol + NAD(+) + 4 H(+)(out). Core subunit of the mitochondrial membrane respiratory chain NADH dehydrogenase (Complex I) that is believed to belong to the minimal assembly required for catalysis. Complex I functions in the transfer of electrons from NADH to the respiratory chain. The immediate electron acceptor for the enzyme is believed to be ubiquinone. This Pecten maximus (King scallop) protein is NADH-ubiquinone oxidoreductase chain 1 (ND1).